The chain runs to 198 residues: Protein GrpE (198 aa).

Residues methionine 1–glutamate 21 are compositionally biased toward basic and acidic residues. A disordered region spans residues methionine 1 to asparagine 56. Low complexity predominate over residues glycine 22–alanine 34. A compositionally biased stretch (basic and acidic residues) spans glycine 44–asparagine 56.

It belongs to the GrpE family. Homodimer.

The protein resides in the cytoplasm. Participates actively in the response to hyperosmotic and heat shock by preventing the aggregation of stress-denatured proteins, in association with DnaK and GrpE. It is the nucleotide exchange factor for DnaK and may function as a thermosensor. Unfolded proteins bind initially to DnaJ; upon interaction with the DnaJ-bound protein, DnaK hydrolyzes its bound ATP, resulting in the formation of a stable complex. GrpE releases ADP from DnaK; ATP binding to DnaK triggers the release of the substrate protein, thus completing the reaction cycle. Several rounds of ATP-dependent interactions between DnaJ, DnaK and GrpE are required for fully efficient folding. This chain is Protein GrpE, found in Chlorobium luteolum (strain DSM 273 / BCRC 81028 / 2530) (Pelodictyon luteolum).